The primary structure comprises 2335 residues: Serine/threonine-protein kinase tor1 (2335 aa).

HEAT repeat units follow at residues methionine 1 to lysine 31, leucine 164 to glutamine 201, proline 331 to leucine 371, proline 410 to proline 449, tyrosine 474 to isoleucine 512, glutamate 522 to alanine 560, proline 562 to alanine 596, proline 642 to glutamate 679, aspartate 684 to tyrosine 722, leucine 728 to tyrosine 766, valine 843 to proline 880, leucine 904 to lysine 923, phenylalanine 924 to asparagine 961, glutamate 964 to phenylalanine 1003, and aspartate 1005 to tyrosine 1042. Residues valine 1226–serine 1781 form the FAT domain. In terms of domain architecture, PI3K/PI4K catalytic spans phenylalanine 1955–serine 2269. The segment at valine 1961–arginine 1967 is G-loop. Threonine 1972 bears the Phosphothreonine; by PKB/AKT1 mark. The tract at residues glycine 2134–asparagine 2142 is catalytic loop. Residues histidine 2154–threonine 2179 are activation loop. Residues glutamate 2303 to tryptophan 2335 enclose the FATC domain.

This sequence belongs to the PI3/PI4-kinase family. As to quaternary structure, the target of rapamycin complex 2 (TORC2) is composed of at least bit61, pop3/wat1, sin1, ste20 and tor1. Post-translationally, phosphorylation at Thr-1972 in the ATP-binding region by AKT1 strongly reduces kinase activity.

It localises to the cytoplasm. The enzyme catalyses L-seryl-[protein] + ATP = O-phospho-L-seryl-[protein] + ADP + H(+). It catalyses the reaction L-threonyl-[protein] + ATP = O-phospho-L-threonyl-[protein] + ADP + H(+). Catalytic component of TORC2, which regulates multiple cellular processes to control cell growth in response to environmental signals. In response to signals, TORC2 phosphorylates AGC protein kinase family members. TORC2 is required for cell survival under various stress conditions. TORC2 positively controls G1 cell-cycle arrest, sexual development and amino acid uptake. Positively regulates amino acid uptake through the control of expression of amino acid permeases. Responsible for the phosphorylation of AGC kinase gad8 at 'Ser-527' and 'Ser-546', activating gad8 kinase activity and promoting sexual development. The chain is Serine/threonine-protein kinase tor1 from Schizosaccharomyces pombe (strain 972 / ATCC 24843) (Fission yeast).